The primary structure comprises 903 residues: Probable dipeptidyl-aminopeptidase B (903 aa).

Positions 1-83 (MGKFEDDGNS…PLISSGTKTG (83 aa)) are disordered. Topologically, residues 1-90 (MGKFEDDGNS…KTGSSSRLRK (90 aa)) are cytoplasmic. Residues 10–37 (SESVPLTRQRSESLASQTSTDSGLSIAS) are compositionally biased toward polar residues. Residues 91-111 (IVWLLVLLCVGGWVLSFVLFL) traverse the membrane as a helical; Signal-anchor for type II membrane protein segment. Residues 112 to 903 (TQKRPDTAAL…TANPKPQEST (792 aa)) lie on the Vacuolar side of the membrane. Residues 121–143 (LSSASTVEIHEPGPATGGTSHGK) form a disordered region. 3 N-linked (GlcNAc...) asparagine glycosylation sites follow: asparagine 268, asparagine 349, and asparagine 640. Catalysis depends on serine 754, which acts as the Charge relay system. The N-linked (GlcNAc...) asparagine glycan is linked to asparagine 808. Active-site charge relay system residues include aspartate 831 and histidine 864.

It belongs to the peptidase S9B family.

The protein localises to the vacuole membrane. It carries out the reaction Release of an N-terminal dipeptide, Xaa-Yaa-|-Zaa-, from a polypeptide, preferentially when Yaa is Pro, provided Zaa is neither Pro nor hydroxyproline.. Functionally, type IV dipeptidyl-peptidase which removes N-terminal dipeptides sequentially from polypeptides having unsubstituted N-termini provided that the penultimate residue is proline. This is Probable dipeptidyl-aminopeptidase B (dapB) from Penicillium rubens (strain ATCC 28089 / DSM 1075 / NRRL 1951 / Wisconsin 54-1255) (Penicillium chrysogenum).